The following is a 292-amino-acid chain: Protoheme IX farnesyltransferase (292 aa).

The next 8 helical transmembrane spans lie at 15 to 35 (YLVL…LGGM), 49 to 69 (FWTL…NMVI), 104 to 124 (VFSL…LVAL), 147 to 167 (IGGI…SGSV), 171 to 191 (AIAL…VLAL), 218 to 238 (TLLY…TGLV), 242 to 262 (YFVV…KFFF), and 271 to 291 (LFFF…VDMV).

Belongs to the UbiA prenyltransferase family. Protoheme IX farnesyltransferase subfamily.

It localises to the cell inner membrane. The enzyme catalyses heme b + (2E,6E)-farnesyl diphosphate + H2O = Fe(II)-heme o + diphosphate. Its pathway is porphyrin-containing compound metabolism; heme O biosynthesis; heme O from protoheme: step 1/1. Its function is as follows. Converts heme B (protoheme IX) to heme O by substitution of the vinyl group on carbon 2 of heme B porphyrin ring with a hydroxyethyl farnesyl side group. The polypeptide is Protoheme IX farnesyltransferase (Aquifex aeolicus (strain VF5)).